A 140-amino-acid polypeptide reads, in one-letter code: PDZ domain-containing protein 11 (140 aa).

The PDZ domain occupies 47 to 129 (IVTLKKPPGA…ISMRVRFFPY (83 aa)).

Interacts with ATP2B1, ATP2B2, ATP2B3, ATP2B4 and ATP7A. Interacts with PLEKHA7 (via WW domains) at zonula adherens; this interaction is essential for the interaction between PLEKHA7 and the ADAM10-binding protein TSPAN33. Interacts with SLC5A6.

It localises to the cytoplasm. The protein localises to the cell junction. The protein resides in the adherens junction. It is found in the cell membrane. In terms of biological role, mediates docking of ADAM10 to zonula adherens by interacting with PLEKHA7 which is required for PLEKHA7 to interact with the ADAM10-binding protein TSPAN33. This Mus musculus (Mouse) protein is PDZ domain-containing protein 11 (Pdzd11).